Reading from the N-terminus, the 559-residue chain is DNA ligase (559 aa).

Glutamate 247 contributes to the ATP binding site. Lysine 249 serves as the catalytic N6-AMP-lysine intermediate. Arginine 254, arginine 269, glutamate 299, phenylalanine 339, arginine 414, and lysine 420 together coordinate ATP.

Belongs to the ATP-dependent DNA ligase family. Mg(2+) serves as cofactor.

It carries out the reaction ATP + (deoxyribonucleotide)n-3'-hydroxyl + 5'-phospho-(deoxyribonucleotide)m = (deoxyribonucleotide)n+m + AMP + diphosphate.. Functionally, DNA ligase that seals nicks in double-stranded DNA during DNA replication, DNA recombination and DNA repair. This is DNA ligase from Pyrococcus abyssi.